A 55-amino-acid chain; its full sequence is Methylmalonyl-CoA decarboxylase subunit epsilon (55 aa).

As to quaternary structure, the methylmalonyl-CoA decarboxylase is composed of five subunits: the carboxyltransferase alpha subunit (MmdA), the tunnel beta subunit (MmdB), the biotin-containing gamma subunit (MmdC), and the delta (MmdD) and epsilon (MmdE) subunits.

It localises to the cell membrane. It carries out the reaction (S)-methylmalonyl-CoA + Na(+)(in) + H(+)(out) = propanoyl-CoA + Na(+)(out) + CO2. With respect to regulation, completely inhibited by avidin. Subunit of the sodium ion pump methylmalonyl-CoA decarboxylase, which converts the chemical energy of a decarboxylation reaction into an electrochemical gradient of Na(+) ions across the cytoplasmic membrane, thereby creating a sodium ion motive force that is used for ATP synthesis. The epsilon subunit seems not important for the catalysis of either decarboxylation or Na(+) transport, but it improves binding of the alpha subunit and plays an important role in stabilizing the methylmalonyl-CoA-decarboxylase enzyme complex. Can also convert malonyl-CoA into acetyl-CoA. The protein is Methylmalonyl-CoA decarboxylase subunit epsilon of Veillonella parvula (Staphylococcus parvulus).